The sequence spans 232 residues: Fibrillarin-like rRNA/tRNA 2'-O-methyltransferase (232 aa).

S-adenosyl-L-methionine-binding positions include 87-88 (TT), 105-106 (EF), 130-131 (DA), and 150-153 (DVAQ).

It belongs to the methyltransferase superfamily. Fibrillarin family. As to quaternary structure, interacts with nop5. Component of box C/D small ribonucleoprotein (sRNP) particles that contain rpl7ae, FlpA and nop5, plus a guide RNA.

In terms of biological role, involved in pre-rRNA and tRNA processing. Utilizes the methyl donor S-adenosyl-L-methionine to catalyze the site-specific 2'-hydroxyl methylation of ribose moieties in rRNA and tRNA. Site specificity is provided by a guide RNA that base pairs with the substrate. Methylation occurs at a characteristic distance from the sequence involved in base pairing with the guide RNA. The sequence is that of Fibrillarin-like rRNA/tRNA 2'-O-methyltransferase from Methanococcus maripaludis (strain C7 / ATCC BAA-1331).